A 173-amino-acid chain; its full sequence is Bacterial deubiquitinase-like protein BilC (173 aa).

Residues His103, His105, and Asp115 each contribute to the Zn(2+) site.

Belongs to the M67B family. Zn(2+) is required as a cofactor.

In terms of biological role, component of the Bil (bacterial ISG15-like) antiviral defense system, composed of BilA, BilB, BilC and BilD. The Bil system specifically conjugates a ubiquitin-like moiety (bilA) to the bacteriophage central tail fiber (CTF, or tip attachment protein J) via reactions involving E1 (bilD) and E2 (bilB). Modifies CTF of phage SECphi27 and SECphi4, which probably interferes with assembly of the phage tail. Also modifies T5 baseplate hub protein pb3 (gene D16), but not gp27 of phage T6 (Bil defends against T6). BilC is a probable metalloprotease that may cleave non-specifically conjugated targets. Bil-encoding bacteria produce mostly defective phage SECphi27, many of which have phage assembly defects, including no tails. SECphi27 phage progeny produced in E.coli with the Bil system inject less DNA into naive host cells, maybe because the phage are less able to adsorb and inject their DNA into host cells. Its function is as follows. Expression of the Bil system in E.coli (strain MG1655) confers about 100-fold resistance to phage SECphi27, SECphi18, SECphi6, SECphi4 and T5, but not to SECphi17. When cells expressing the Bil system are infected by phage SECphi27 at low multiplicity of infection (0.03 MOI) the culture survives, at 3.0 MOI the culture collapses at the same time as cells without the Bil system. Cleaves a ubiquitin-GFP (Ubl-GFP) fusion protein in vivo. The polypeptide is Bacterial deubiquitinase-like protein BilC (Collimonas sp. (strain OK412)).